Consider the following 72-residue polypeptide: Translation initiation factor IF-1 (72 aa).

In terms of domain architecture, S1-like spans 1-72 (MAKEDNIEMQ…SKGRIVFRAR (72 aa)).

The protein belongs to the IF-1 family. Component of the 30S ribosomal translation pre-initiation complex which assembles on the 30S ribosome in the order IF-2 and IF-3, IF-1 and N-formylmethionyl-tRNA(fMet); mRNA recruitment can occur at any time during PIC assembly.

The protein resides in the cytoplasm. Its function is as follows. One of the essential components for the initiation of protein synthesis. Stabilizes the binding of IF-2 and IF-3 on the 30S subunit to which N-formylmethionyl-tRNA(fMet) subsequently binds. Helps modulate mRNA selection, yielding the 30S pre-initiation complex (PIC). Upon addition of the 50S ribosomal subunit IF-1, IF-2 and IF-3 are released leaving the mature 70S translation initiation complex. In Shewanella frigidimarina (strain NCIMB 400), this protein is Translation initiation factor IF-1.